Consider the following 451-residue polypeptide: UDP-N-acetylmuramoylalanine--D-glutamate ligase (451 aa).

120 to 126 provides a ligand contact to ATP; sequence GSNGKTT.

The protein belongs to the MurCDEF family.

The protein localises to the cytoplasm. It carries out the reaction UDP-N-acetyl-alpha-D-muramoyl-L-alanine + D-glutamate + ATP = UDP-N-acetyl-alpha-D-muramoyl-L-alanyl-D-glutamate + ADP + phosphate + H(+). The protein operates within cell wall biogenesis; peptidoglycan biosynthesis. Its function is as follows. Cell wall formation. Catalyzes the addition of glutamate to the nucleotide precursor UDP-N-acetylmuramoyl-L-alanine (UMA). The chain is UDP-N-acetylmuramoylalanine--D-glutamate ligase from Bacillus pumilus (strain SAFR-032).